Here is a 131-residue protein sequence, read N- to C-terminus: Methylglyoxal synthase (131 aa).

In terms of domain architecture, MGS-like spans 1-131 (MKIALIAHDK…GDLDYRKLRK (131 aa)). Substrate-binding positions include His8, Lys12, 34–37 (TGTT), and 54–55 (SG). Asp60 serves as the catalytic Proton donor/acceptor. Residue His87 coordinates substrate.

This sequence belongs to the methylglyoxal synthase family.

The catalysed reaction is dihydroxyacetone phosphate = methylglyoxal + phosphate. In terms of biological role, catalyzes the formation of methylglyoxal from dihydroxyacetone phosphate. This chain is Methylglyoxal synthase, found in Bacillus cereus (strain AH820).